Here is a 208-residue protein sequence, read N- to C-terminus: Redox-sensing transcriptional repressor Rex (208 aa).

The segment at residues 16 to 55 (VYSRYLENLYRKGITTVSSADIAQGVGVTSAQVRKDLAYF) is a DNA-binding region (H-T-H motif). 90 to 95 (GAGNLG) contacts NAD(+).

It belongs to the transcriptional regulatory Rex family. As to quaternary structure, homodimer.

The protein resides in the cytoplasm. In terms of biological role, modulates transcription in response to changes in cellular NADH/NAD(+) redox state. The polypeptide is Redox-sensing transcriptional repressor Rex (Carboxydothermus hydrogenoformans (strain ATCC BAA-161 / DSM 6008 / Z-2901)).